The chain runs to 347 residues: Protein RecA (347 aa).

Residue 65–72 participates in ATP binding; sequence GPESSGKT. The segment covering 327–336 has biased composition (basic and acidic residues); that stretch reads KFEPTELSRE. Residues 327-347 are disordered; it reads KFEPTELSREEGDEDTLEDAM. The segment covering 337–347 has biased composition (acidic residues); the sequence is EGDEDTLEDAM.

This sequence belongs to the RecA family.

The protein localises to the cytoplasm. In terms of biological role, can catalyze the hydrolysis of ATP in the presence of single-stranded DNA, the ATP-dependent uptake of single-stranded DNA by duplex DNA, and the ATP-dependent hybridization of homologous single-stranded DNAs. It interacts with LexA causing its activation and leading to its autocatalytic cleavage. The sequence is that of Protein RecA from Xylella fastidiosa (strain M23).